Consider the following 398-residue polypeptide: S-adenosylmethionine decarboxylase proenzyme (398 aa).

Active-site residues include glutamate 18 and glutamate 21. Serine 78 acts as the Schiff-base intermediate with substrate; via pyruvic acid in catalysis. Residue serine 78 is modified to Pyruvic acid (Ser); by autocatalysis. The Proton donor; for catalytic activity role is filled by cysteine 92. Active-site proton acceptor; for processing activity residues include serine 243 and histidine 256.

The protein belongs to the eukaryotic AdoMetDC family. The cofactor is pyruvate. In terms of processing, is synthesized initially as an inactive proenzyme. Formation of the active enzyme involves a self-maturation process in which the active site pyruvoyl group is generated from an internal serine residue via an autocatalytic post-translational modification. Two non-identical subunits are generated from the proenzyme in this reaction, and the pyruvate is formed at the N-terminus of the alpha chain, which is derived from the carboxyl end of the proenzyme. The post-translation cleavage follows an unusual pathway, termed non-hydrolytic serinolysis, in which the side chain hydroxyl group of the serine supplies its oxygen atom to form the C-terminus of the beta chain, while the remainder of the serine residue undergoes an oxidative deamination to produce ammonia and the pyruvoyl group blocking the N-terminus of the alpha chain.

It catalyses the reaction S-adenosyl-L-methionine + H(+) = S-adenosyl 3-(methylsulfanyl)propylamine + CO2. Its pathway is amine and polyamine biosynthesis; S-adenosylmethioninamine biosynthesis; S-adenosylmethioninamine from S-adenosyl-L-methionine: step 1/1. The protein is S-adenosylmethionine decarboxylase proenzyme (SAMDC) of Oryza sativa subsp. japonica (Rice).